The chain runs to 113 residues: Large ribosomal subunit protein bL19 (113 aa).

This sequence belongs to the bacterial ribosomal protein bL19 family.

Functionally, this protein is located at the 30S-50S ribosomal subunit interface and may play a role in the structure and function of the aminoacyl-tRNA binding site. The sequence is that of Large ribosomal subunit protein bL19 from Corynebacterium jeikeium (strain K411).